The following is a 386-amino-acid chain: Porin PorA (386 aa).

The N-terminal stretch at 1 to 35 is a signal peptide; sequence MKRTLGHALIIIGAALIVIAVLLPTFLVPRLRVIP. The segment covering 53–63 has biased composition (polar residues); that stretch reads DSSQLGKNEPT. Residues 53 to 78 are disordered; the sequence is DSSQLGKNEPTPNRKNDPRCKAETDE. The span at 64-78 shows a compositional bias: basic and acidic residues; sequence PNRKNDPRCKAETDE.

Belongs to the PorA family.

The protein localises to the secreted. It localises to the cell wall. In terms of biological role, forms water-filled channels that favor the permeation of cations. This chain is Porin PorA, found in Corynebacterium amycolatum.